The following is a 211-amino-acid chain: Metalloproteinase inhibitor 3 (211 aa).

Positions 1–23 (MTPWLGLIVLLGSWSLGDWGAEA) are cleaved as a signal peptide. C24 contributes to the Zn(2+) binding site. Involved in metalloproteinase-binding stretches follow at residues 24 to 27 (CTCS) and 88 to 89 (ES). Disulfide bonds link C24/C91, C26/C118, C36/C143, C145/C192, C150/C155, and C163/C184. Residues 24 to 143 (CTCSPSHPQD…GLNYRYHLGC (120 aa)) form the NTR domain. The segment at 105–188 (TGRVYDGKMY…SKHYACIRQK (84 aa)) is mediates interaction with EFEMP1. A glycan (N-linked (GlcNAc...) asparagine) is linked at N207.

This sequence belongs to the protease inhibitor I35 (TIMP) family. Interacts with EFEMP1. Interacts with KDR.

The protein resides in the secreted. It localises to the extracellular space. The protein localises to the extracellular matrix. Functionally, mediates a variety of processes including matrix regulation and turnover, inflammation, and angiogenesis, through reversible inhibition of zinc protease superfamily enzymes, primarily matrix metalloproteinases (MMPs). Regulates extracellular matrix (ECM) remodeling through inhibition of matrix metalloproteinases (MMP) including MMP-1, MMP-2, MMP-3, MMP-7, MMP-9, MMP-13, MMP-14 and MMP-15. Additionally, modulates the processing of amyloid precursor protein (APP) and apolipoprotein E receptor ApoER2 by inhibiting two alpha-secretases ADAM10 and ADAM17. Functions as a tumor suppressor and a potent inhibitor of angiogenesis. Exerts its anti-angiogenic effect by directly interacting with vascular endothelial growth factor (VEGF) receptor-2/KDR, preventing its binding to the VEGFA ligand. Selectively induces apoptosis in angiogenic endothelial cells through a caspase-independent cell death pathway. Mechanistically, inhibits matrix-induced focal adhesion kinase PTK2 tyrosine phosphorylation and association with paxillin/PXN and disrupts the incorporation of ITGB3, PTK2 and PXN into focal adhesion contacts on the matrix. The polypeptide is Metalloproteinase inhibitor 3 (TIMP3) (Macaca mulatta (Rhesus macaque)).